Reading from the N-terminus, the 892-residue chain is Alanine--tRNA ligase (892 aa).

4 residues coordinate Zn(2+): H596, H600, C700, and H704.

The protein belongs to the class-II aminoacyl-tRNA synthetase family. It depends on Zn(2+) as a cofactor.

It localises to the cytoplasm. The catalysed reaction is tRNA(Ala) + L-alanine + ATP = L-alanyl-tRNA(Ala) + AMP + diphosphate. In terms of biological role, catalyzes the attachment of alanine to tRNA(Ala) in a two-step reaction: alanine is first activated by ATP to form Ala-AMP and then transferred to the acceptor end of tRNA(Ala). Also edits incorrectly charged Ser-tRNA(Ala) and Gly-tRNA(Ala) via its editing domain. The protein is Alanine--tRNA ligase of Methanococcus maripaludis (strain DSM 14266 / JCM 13030 / NBRC 101832 / S2 / LL).